The primary structure comprises 405 residues: Enoyl-[acyl-carrier-protein] reductase [NADH] (405 aa).

NAD(+) is bound by residues 51–56, 77–78, 114–115, and 142–143; these read GASSGY, FE, DA, and LA. Tyr228 lines the substrate pocket. Catalysis depends on Tyr238, which acts as the Proton donor. Residues Lys247 and 276–278 contribute to the NAD(+) site; that span reads VVT.

The protein belongs to the TER reductase family. In terms of assembly, monomer.

The enzyme catalyses a 2,3-saturated acyl-[ACP] + NAD(+) = a (2E)-enoyl-[ACP] + NADH + H(+). Its pathway is lipid metabolism; fatty acid biosynthesis. Involved in the final reduction of the elongation cycle of fatty acid synthesis (FAS II). Catalyzes the reduction of a carbon-carbon double bond in an enoyl moiety that is covalently linked to an acyl carrier protein (ACP). The polypeptide is Enoyl-[acyl-carrier-protein] reductase [NADH] (Chromohalobacter salexigens (strain ATCC BAA-138 / DSM 3043 / CIP 106854 / NCIMB 13768 / 1H11)).